Consider the following 145-residue polypeptide: Large ribosomal subunit protein uL16 (145 aa).

Over residues 1 to 21 (MLVPTRVKHRKQHRGRMHGKA) the composition is skewed to basic residues. The interval 1 to 22 (MLVPTRVKHRKQHRGRMHGKAT) is disordered.

This sequence belongs to the universal ribosomal protein uL16 family. Part of the 50S ribosomal subunit.

Binds 23S rRNA and is also seen to make contacts with the A and possibly P site tRNAs. The polypeptide is Large ribosomal subunit protein uL16 (Desulfitobacterium hafniense (strain Y51)).